Reading from the N-terminus, the 747-residue chain is DNA topoisomerase 4 subunit A (747 aa).

The Topo IIA-type catalytic domain maps to 35–498 (LPFIGDGLKP…EAKMISESDM (464 aa)). The O-(5'-phospho-DNA)-tyrosine intermediate role is filled by tyrosine 124.

This sequence belongs to the type II topoisomerase GyrA/ParC subunit family. ParC type 1 subfamily. In terms of assembly, heterotetramer composed of ParC and ParE.

It is found in the cell membrane. The catalysed reaction is ATP-dependent breakage, passage and rejoining of double-stranded DNA.. Topoisomerase IV is essential for chromosome segregation. It relaxes supercoiled DNA. Performs the decatenation events required during the replication of a circular DNA molecule. In Haemophilus influenzae (strain ATCC 51907 / DSM 11121 / KW20 / Rd), this protein is DNA topoisomerase 4 subunit A.